A 385-amino-acid polypeptide reads, in one-letter code: Probable splicing factor YJU2B (385 aa).

The segment at 1-26 (MGERKGQNKYYPPDFNPEKHGSLNRY) is disordered. Residue Ser40 is modified to Phosphoserine. Residues 182 to 215 (LNSMLRRHFREKKKAMQEEEEKDQALQAKANLAI) are a coiled coil. The tract at residues 256–385 (FPSAQGPSTS…VADYSDSESE (130 aa)) is disordered. Polar residues predominate over residues 260 to 270 (QGPSTSSSKAS). Position 306 is a phosphoserine (Ser306). Composition is skewed to polar residues over residues 307–316 (PQCTADNSLS) and 359–373 (GSSQ…TPNA).

Belongs to the CWC16 family.

Its subcellular location is the nucleus. May be involved in mRNA splicing. This chain is Probable splicing factor YJU2B, found in Rattus norvegicus (Rat).